A 398-amino-acid polypeptide reads, in one-letter code: Digeranylgeranylglycerophospholipid reductase (398 aa).

Ala-15, Glu-34, Cys-45, Ala-46, Gly-48, Arg-99, Ala-123, Asp-280, Gly-292, and Ile-293 together coordinate FAD. Val-372 is an a 2,3-bis-O-(geranylgeranyl)-sn-glycerol 1-phospholipid binding site.

The protein belongs to the geranylgeranyl reductase family. DGGGPL reductase subfamily. FAD serves as cofactor.

It catalyses the reaction a 2,3-bis-O-phytanyl-sn-glycerol 1-phospholipid + 8 oxidized 2[4Fe-4S]-[ferredoxin] = a 2,3-bis-O-(geranylgeranyl)-sn-glycerol 1-phospholipid + 8 reduced 2[4Fe-4S]-[ferredoxin] + 16 H(+). The catalysed reaction is 2,3-bis-O-(phytanyl)-sn-glycerol 1-phosphate + 8 oxidized 2[4Fe-4S]-[ferredoxin] = 2,3-bis-O-(geranylgeranyl)-sn-glycerol 1-phosphate + 8 reduced 2[4Fe-4S]-[ferredoxin] + 16 H(+). The enzyme catalyses a 2,3-bis-O-phytanyl-sn-glycerol 1-phospholipid + 8 A = a 2,3-bis-O-(geranylgeranyl)-sn-glycerol 1-phospholipid + 8 AH2. It carries out the reaction CDP-2,3-bis-O-(geranylgeranyl)-sn-glycerol + 8 AH2 = CDP-2,3-bis-O-(phytanyl)-sn-glycerol + 8 A. It catalyses the reaction archaetidylserine + 8 AH2 = 2,3-bis-O-phytanyl-sn-glycero-3-phospho-L-serine + 8 A. The protein operates within membrane lipid metabolism; glycerophospholipid metabolism. In terms of biological role, is involved in the reduction of 2,3-digeranylgeranylglycerophospholipids (unsaturated archaeols) into 2,3-diphytanylglycerophospholipids (saturated archaeols) in the biosynthesis of archaeal membrane lipids. Catalyzes the formation of archaetidic acid (2,3-di-O-phytanyl-sn-glyceryl phosphate) from 2,3-di-O-geranylgeranylglyceryl phosphate (DGGGP) via the hydrogenation of each double bond of the isoprenoid chains. Is also probably able to reduce double bonds of geranyl groups in CDP-2,3-bis-O-(geranylgeranyl)-sn-glycerol and archaetidylserine, thus acting at various stages in the biosynthesis of archaeal membrane lipids. The protein is Digeranylgeranylglycerophospholipid reductase of Methanoculleus marisnigri (strain ATCC 35101 / DSM 1498 / JR1).